Consider the following 126-residue polypeptide: Protein ApaG (126 aa).

Residues 2–126 (NQRLSPIKVE…FSLAVPGLLH (125 aa)) enclose the ApaG domain.

The polypeptide is Protein ApaG (Shewanella piezotolerans (strain WP3 / JCM 13877)).